A 432-amino-acid chain; its full sequence is 3-phosphoshikimate 1-carboxyvinyltransferase (432 aa).

Lys-22, Ser-23, and Arg-27 together coordinate 3-phosphoshikimate. Lys-22 serves as a coordination point for phosphoenolpyruvate. Phosphoenolpyruvate contacts are provided by Gly-96 and Arg-127. The 3-phosphoshikimate site is built by Ser-173, Ser-174, Gln-175, Ser-201, Asp-316, Asn-339, and Lys-343. Gln-175 contributes to the phosphoenolpyruvate binding site. Asp-316 serves as the catalytic Proton acceptor. Phosphoenolpyruvate contacts are provided by Arg-347, Arg-391, and Lys-416.

Belongs to the EPSP synthase family. In terms of assembly, monomer.

It is found in the cytoplasm. The enzyme catalyses 3-phosphoshikimate + phosphoenolpyruvate = 5-O-(1-carboxyvinyl)-3-phosphoshikimate + phosphate. Its pathway is metabolic intermediate biosynthesis; chorismate biosynthesis; chorismate from D-erythrose 4-phosphate and phosphoenolpyruvate: step 6/7. Functionally, catalyzes the transfer of the enolpyruvyl moiety of phosphoenolpyruvate (PEP) to the 5-hydroxyl of shikimate-3-phosphate (S3P) to produce enolpyruvyl shikimate-3-phosphate and inorganic phosphate. This is 3-phosphoshikimate 1-carboxyvinyltransferase from Haemophilus influenzae (strain 86-028NP).